A 326-amino-acid polypeptide reads, in one-letter code: GTP 3',8-cyclase (326 aa).

The 226-residue stretch at 7–232 folds into the Radical SAM core domain; that stretch reads GFGRSFPYLR…PRAADAGPAR (226 aa). GTP is bound at residue Arg16. [4Fe-4S] cluster-binding residues include Cys23 and Cys27. Tyr29 lines the S-adenosyl-L-methionine pocket. Cys30 contributes to the [4Fe-4S] cluster binding site. Residue Arg65 coordinates GTP. Gly69 is an S-adenosyl-L-methionine binding site. Residue Thr96 coordinates GTP. Ser120 contacts S-adenosyl-L-methionine. GTP is bound at residue Lys157. Residue Met191 coordinates S-adenosyl-L-methionine. The [4Fe-4S] cluster site is built by Cys254 and Cys257. GTP is bound at residue 259 to 261; it reads RLR. Cys271 serves as a coordination point for [4Fe-4S] cluster.

The protein belongs to the radical SAM superfamily. MoaA family. In terms of assembly, monomer and homodimer. Requires [4Fe-4S] cluster as cofactor.

The enzyme catalyses GTP + AH2 + S-adenosyl-L-methionine = (8S)-3',8-cyclo-7,8-dihydroguanosine 5'-triphosphate + 5'-deoxyadenosine + L-methionine + A + H(+). The protein operates within cofactor biosynthesis; molybdopterin biosynthesis. Functionally, catalyzes the cyclization of GTP to (8S)-3',8-cyclo-7,8-dihydroguanosine 5'-triphosphate. This is GTP 3',8-cyclase from Stenotrophomonas maltophilia (strain R551-3).